A 77-amino-acid chain; its full sequence is Small ribosomal subunit protein uS17 (77 aa).

It belongs to the universal ribosomal protein uS17 family. In terms of assembly, part of the 30S ribosomal subunit.

In terms of biological role, one of the primary rRNA binding proteins, it binds specifically to the 5'-end of 16S ribosomal RNA. The chain is Small ribosomal subunit protein uS17 from Rickettsia conorii (strain ATCC VR-613 / Malish 7).